A 60-amino-acid chain; its full sequence is Arabinogalactan protein 12 (60 aa).

Residues M1–A27 form the signal peptide. The residue at position 28 (Q28) is a Pyrrolidone carboxylic acid. 3 positions are modified to 4-hydroxyproline: P32, P34, and P36. O-linked (Ara...) hydroxyproline glycans are attached at residues P32, P34, and P36. The GPI-anchor amidated serine moiety is linked to residue S38. The propeptide at D39–F60 is removed in mature form.

It belongs to the AG-peptide AGP family. Post-translationally, contains 4-hydroxyproline; hydroxylated on Pro-32, Pro-34 and Pro-36. In terms of processing, O-glycosylated on hydroxyprolines; noncontiguous hydroxylproline residues are glycosylated with arabinogalactan. In terms of tissue distribution, expressed in reproductive tissues. Expressed in chalaza, funiculus, stigma, septum, style and transmitting tract.

It localises to the cell membrane. Functionally, proteoglycan that seems to be implicated in diverse developmental roles such as differentiation, cell-cell recognition, embryogenesis and programmed cell death. In Arabidopsis thaliana (Mouse-ear cress), this protein is Arabinogalactan protein 12.